A 396-amino-acid chain; its full sequence is Elongation factor Tu (396 aa).

Residues 10–206 enclose the tr-type G domain; it reads KPHVNIGTIG…AVDAYIPEPE (197 aa). The segment at 19–26 is G1; sequence GHVDHGKT. 19 to 26 is a GTP binding site; that stretch reads GHVDHGKT. Residue Thr26 coordinates Mg(2+). The G2 stretch occupies residues 60–64; sequence GITIS. Residues 81–84 are G3; the sequence is DCPG. GTP is bound by residues 81 to 85 and 136 to 139; these read DCPGH and NKVD. A G4 region spans residues 136-139; the sequence is NKVD. Positions 174–176 are G5; it reads SAL.

Belongs to the TRAFAC class translation factor GTPase superfamily. Classic translation factor GTPase family. EF-Tu/EF-1A subfamily. Monomer.

It localises to the cytoplasm. The enzyme catalyses GTP + H2O = GDP + phosphate + H(+). Its function is as follows. GTP hydrolase that promotes the GTP-dependent binding of aminoacyl-tRNA to the A-site of ribosomes during protein biosynthesis. The polypeptide is Elongation factor Tu (Magnetococcus marinus (strain ATCC BAA-1437 / JCM 17883 / MC-1)).